The sequence spans 646 residues: ATP-dependent zinc metalloprotease FtsH (646 aa).

Positions 1–27 (MTNNQTDRPRPPGPESRRFDNNDKNNR) are disordered. At 1-35 (MTNNQTDRPRPPGPESRRFDNNDKNNRNRWGPIPS) the chain is on the cytoplasmic side. The segment covering 7–26 (DRPRPPGPESRRFDNNDKNN) has biased composition (basic and acidic residues). A helical membrane pass occupies residues 36-56 (WAWIVLIVALLLNWLVAPILF). At 57–144 (PEGKGAVSIP…QPESSTRSLL (88 aa)) the chain is on the extracellular side. A helical membrane pass occupies residues 145 to 165 (LSILISFGPTILFFLLFLWLI). Over 166–646 (SKAQSSQQGL…GLGEKQPEPA (481 aa)) the chain is Cytoplasmic. 237–244 (GPPGTGKT) lines the ATP pocket. His-459 provides a ligand contact to Zn(2+). Glu-460 is a catalytic residue. His-463 and Asp-535 together coordinate Zn(2+).

It in the central section; belongs to the AAA ATPase family. This sequence in the C-terminal section; belongs to the peptidase M41 family. Homohexamer. Zn(2+) serves as cofactor.

The protein resides in the cell membrane. Acts as a processive, ATP-dependent zinc metallopeptidase for both cytoplasmic and membrane proteins. Plays a role in the quality control of integral membrane proteins. This chain is ATP-dependent zinc metalloprotease FtsH, found in Thermobaculum terrenum (strain ATCC BAA-798 / CCMEE 7001 / YNP1).